The chain runs to 691 residues: MLRGQEERKYSIRKYSIGVVSVLAATMFVVTSHEAQASEKIPTTNAAAQKETLNQPGEQGNAITSHQMQSGKQLDDMHKENGKSGTVTEGKDMLQSSKHQSTQNSKIIRTQNDNQVKQDSERQGSKQSHQNNATNKTERQNDQIQNTHHAERNGSQSTTSQSNDVDKSQPSIPAQKVIPNHDKAAPTSTTPPSNDKTAPKSTKEQDATTDKHPNQQDTHQPAHQIIDAKQDDNVHQSNQKPQVGDLSKHIDGQNSPEKPTDKNTDNKQLIKDALQAPKTRSTTNAAADAKKVRPLKANQVQPLNKYPVVFVHGFLGLVGDNAPALYPNYWGGNKYKVIEELRKQGYNVHQASVSAFGSNYDRAVELYYYIKGGRVDYGAAHAAKYGHERYGKTYKGIMPNWEPGKKVHLVGHSMGGQTIRLMEEFLRNGNKEEIAYHKAHGGEISPLFTGGHNNMVASITTLATPHNGSQAADKFGNTEAVRKIMFALNRFMGNKYSNIDLGLTQWGFKQLPNESYIDYIKRVSKSKIWTSDDNAAYDLTLNGSAKLNNMTSMNPNITYTTYTGVSSHTGPLGYENPDLGTFFLMDTTSRIIGHDAREEWRKNDGVVPVISSLHPSNQPFVNVTNDEPATRRGIWQVKPIIQGWDHVDFIGVDFLDFKRKGAELANFYTGIINDLLRVEATESKGTQLKAS.

The first 37 residues, 1-37 (MLRGQEERKYSIRKYSIGVVSVLAATMFVVTSHEAQA), serve as a signal peptide directing secretion. Positions 34–267 (EAQASEKIPT…KPTDKNTDNK (234 aa)) are disordered. Positions 38 to 296 (SEKIPTTNAA…ADAKKVRPLK (259 aa)) are excised as a propeptide. Residues 41–72 (IPTTNAAAQKETLNQPGEQGNAITSHQMQSGK) are compositionally biased toward polar residues. Basic and acidic residues predominate over residues 73-82 (QLDDMHKENG). Polar residues-rich tracts occupy residues 94-115 (LQSS…NDNQ), 125-135 (SKQSHQNNATN), 142-172 (DQIQ…QPSI), and 186-196 (PTSTTPPSNDK). Composition is skewed to basic and acidic residues over residues 197 to 214 (TAPK…KHPN) and 258 to 267 (KPTDKNTDNK). Catalysis depends on Ser-413, which acts as the Nucleophile. Residue Gly-580 coordinates Ca(2+). Residue Asp-604 is the Charge relay system of the active site. Asp-645 provides a ligand contact to Ca(2+). His-646 serves as the catalytic Charge relay system. Ca(2+)-binding residues include Asp-648, Asp-653, and Asp-656.

This sequence belongs to the AB hydrolase superfamily. Lipase family.

It localises to the secreted. It catalyses the reaction a triacylglycerol + H2O = a diacylglycerol + a fatty acid + H(+). This Staphylococcus aureus (strain MRSA252) protein is Lipase 2 (lip2).